The primary structure comprises 398 residues: SEC12-like protein 1 (398 aa).

Residue methionine 1 is modified to N-acetylmethionine. At methionine 1 to glutamine 337 the chain is on the cytoplasmic side. WD repeat units lie at residues aspartate 71–threonine 110, glutamine 120–aspartate 159, lysine 162–threonine 201, leucine 252–tyrosine 291, and histidine 296–lysine 334. The helical transmembrane segment at isoleucine 338–glutamate 358 threads the bilayer. Topologically, residues asparagine 359–leucine 398 are lumenal.

Ubiquitous with higher levels in flowers, roots and senescing leaves.

It is found in the endoplasmic reticulum membrane. Its function is as follows. Involved in Pi uptake by facilitating the trafficking of PHT1-1/PHT1;1 from the endoplasmic reticulum to the plasma membrane. The chain is SEC12-like protein 1 (PHF1) from Arabidopsis thaliana (Mouse-ear cress).